Reading from the N-terminus, the 396-residue chain is RNA binding protein fox-1 homolog 1 (396 aa).

Residues 1-119 form a disordered region; the sequence is MNCEREQLRG…ESKSQPKRLH (119 aa). The span at 67 to 86 shows a compositional bias: polar residues; the sequence is PPTQTHSEQSADTSAQTVSG. Residues 87-98 are compositionally biased toward low complexity; that stretch reads TATQTDDAAPTD. Polar residues predominate over residues 99–112; that stretch reads GQPQTQPSENTESK. The 77-residue stretch at 116–192 folds into the RRM domain; sequence KRLHVSNIPF…RKIEVNNATA (77 aa). Asymmetric dimethylarginine occurs at positions 316 and 337. Arg387 bears the Omega-N-methylarginine mark.

In terms of assembly, binds to the C-terminus of ATXN2. In terms of tissue distribution, detected in brain (at protein level). Detected in heart, brain, neurons, skeletal muscle and embryo.

The protein localises to the nucleus. Its subcellular location is the cytoplasm. RNA-binding protein that regulates alternative splicing events by binding to 5'-UGCAUGU-3' elements. Prevents binding of U2AF2 to the 3'-splice site. Regulates alternative splicing of tissue-specific exons and of differentially spliced exons during erythropoiesis. This Mus musculus (Mouse) protein is RNA binding protein fox-1 homolog 1 (Rbfox1).